Consider the following 491-residue polypeptide: Probable Xaa-Pro aminopeptidase An01g13040 (491 aa).

Mn(2+) contacts are provided by Asp276, Asp287, Glu420, and Glu459.

The protein belongs to the peptidase M24B family. The cofactor is Mn(2+).

The catalysed reaction is Release of any N-terminal amino acid, including proline, that is linked to proline, even from a dipeptide or tripeptide.. Catalyzes the removal of a penultimate prolyl residue from the N-termini of peptides. This is Probable Xaa-Pro aminopeptidase An01g13040 from Aspergillus niger (strain ATCC MYA-4892 / CBS 513.88 / FGSC A1513).